Reading from the N-terminus, the 694-residue chain is Voltage-gated chloride channel TMC4 (694 aa).

The segment at 1-21 (MEAWGQSPACSSSRKARTGPS) is disordered. Over 1 to 150 (MEAWGQSPAC…GTESYFSLLR (150 aa)) the chain is Extracellular. Residues 151–171 (FLLFLNLVASVIEICMKLIPT) traverse the membrane as a helical segment. At 172-231 (WLEGAPPGPPGPNISSPCGSYIPHTHGLVAFPTQLFNLLSGEGYLEWSPLFYGFYPPRSN) the chain is on the cytoplasmic side. The chain crosses the membrane as a helical span at residues 232 to 252 (LAITYLCSVFAISVIYLLCIL). The Extracellular portion of the chain corresponds to 253-330 (RRSVSGLKET…SQRAKVWSMR (78 aa)). A helical transmembrane segment spans residues 331–351 (ALLNVLVLALLGAAFYGIYWA). Over 352 to 376 (TEYTLTLQETPLVRQTPLFKLLVDY) the chain is Cytoplasmic. The chain crosses the membrane as a helical span at residues 377-397 (LPSIFISLFNFVLPPVFKFIA). Residues 398 to 407 (SLEGYTQSRQ) are Extracellular-facing. A helical transmembrane segment spans residues 408-428 (IVLILLRTVFLRLASLVFLLV). The Cytoplasmic segment spans residues 429-465 (SLWSQITCGGNMEAEGCKACGYNYKEIPCWETRLGQE). A helical transmembrane segment spans residues 466–486 (MYKLVLFDLLMGLLVTLLVQF). Residues 487 to 513 (PRKILCGLCPGALGRLSGTLEFQVPDE) are Extracellular-facing. Residues 514 to 534 (VLGLIYAQTVVWVGSFFCPLL) form a helical membrane-spanning segment. A topological domain (cytoplasmic) is located at residue Pro535. The chain crosses the membrane as a helical span at residues 536–556 (LINTAKFLILFCLKKITLFSI). The Extracellular portion of the chain corresponds to 557–574 (YSPASRTFRASTANFFFP). A helical membrane pass occupies residues 575–595 (LVLLVGLAISAVPVLYSIFLI). The Cytoplasmic portion of the chain corresponds to 596 to 635 (PPSKLCGPFRGKLSIWAQIPEAIESLPQTAQNFLYFLGTQ). Residues 636–656 (AFTVPLLILSSILMMYTVALA) form a helical membrane-spanning segment. The Extracellular portion of the chain corresponds to 657–694 (NCYGRLISELKRQIETEVQNKVFLAQRAVALSSRNGTS). Asn691 is a glycosylation site (N-linked (GlcNAc...) asparagine).

It belongs to the TMC family. Expressed in taste bud cells of the posterior tongue. Ubiquitously expressed.

The protein localises to the membrane. It carries out the reaction chloride(in) = chloride(out). Voltage-gated chloride channel involved in high-concentration salt taste sensation. Depolarization induced by high NaCl concentration may trigger the activation of TMC4-mediated chloride influx into taste bud cells, helping the return to resting potential. Also allows permeation of organic anions including gluconate, but their current amplitudes at positive potentials are less than that of chloride. Involved in pH and temperature-dependent modulation of salty taste. This chain is Voltage-gated chloride channel TMC4, found in Mus musculus (Mouse).